The sequence spans 407 residues: Probable tRNA sulfurtransferase (407 aa).

Residues 61–165 (NEITYRLSKI…LDAIYMYEEV (105 aa)) form the THUMP domain. Residues 183 to 184 (ML), 208 to 209 (HF), arginine 265, glycine 287, and glutamine 296 each bind ATP.

The protein belongs to the ThiI family.

It localises to the cytoplasm. The enzyme catalyses [ThiI sulfur-carrier protein]-S-sulfanyl-L-cysteine + a uridine in tRNA + 2 reduced [2Fe-2S]-[ferredoxin] + ATP + H(+) = [ThiI sulfur-carrier protein]-L-cysteine + a 4-thiouridine in tRNA + 2 oxidized [2Fe-2S]-[ferredoxin] + AMP + diphosphate. It carries out the reaction [ThiS sulfur-carrier protein]-C-terminal Gly-Gly-AMP + S-sulfanyl-L-cysteinyl-[cysteine desulfurase] + AH2 = [ThiS sulfur-carrier protein]-C-terminal-Gly-aminoethanethioate + L-cysteinyl-[cysteine desulfurase] + A + AMP + 2 H(+). It functions in the pathway cofactor biosynthesis; thiamine diphosphate biosynthesis. Its function is as follows. Catalyzes the ATP-dependent transfer of a sulfur to tRNA to produce 4-thiouridine in position 8 of tRNAs, which functions as a near-UV photosensor. Also catalyzes the transfer of sulfur to the sulfur carrier protein ThiS, forming ThiS-thiocarboxylate. This is a step in the synthesis of thiazole, in the thiamine biosynthesis pathway. The sulfur is donated as persulfide by IscS. This Staphylococcus aureus (strain Mu3 / ATCC 700698) protein is Probable tRNA sulfurtransferase.